We begin with the raw amino-acid sequence, 293 residues long: MASLKEIRAKVTSIKSTQKITRAMQMVAASKMRRAQERMEVGRPYAESMRRVVSHLVNASSDYKHPYMTNRSVNRVGYILVTSDRGLAGGLNINLFKKLMHHVQEFQNQSVEAEFAVIGSKGVSFFKSFGGKVTSAVTDYGDNPTFEQLNAPVQAMLDDYANGRLDRIYMVYNKFVNAMTQQPIVTQLVPLPDSAIDSADAGINTELSWDYIYEPDVKTLIDGLLNRYIESIVYQAVMENIASEQSARMVAMKAATDNAGDLINDLQLVYNKLRQAAITREISEIVGGAAAVS.

This sequence belongs to the ATPase gamma chain family. As to quaternary structure, F-type ATPases have 2 components, CF(1) - the catalytic core - and CF(0) - the membrane proton channel. CF(1) has five subunits: alpha(3), beta(3), gamma(1), delta(1), epsilon(1). CF(0) has three main subunits: a, b and c.

The protein localises to the cell inner membrane. Produces ATP from ADP in the presence of a proton gradient across the membrane. The gamma chain is believed to be important in regulating ATPase activity and the flow of protons through the CF(0) complex. The protein is ATP synthase gamma chain of Psychrobacter sp. (strain PRwf-1).